Here is a 303-residue protein sequence, read N- to C-terminus: Porphobilinogen deaminase (303 aa).

Cysteine 241 bears the S-(dipyrrolylmethanemethyl)cysteine mark.

The protein belongs to the HMBS family. As to quaternary structure, monomer. Dipyrromethane serves as cofactor.

The enzyme catalyses 4 porphobilinogen + H2O = hydroxymethylbilane + 4 NH4(+). Its pathway is porphyrin-containing compound metabolism; protoporphyrin-IX biosynthesis; coproporphyrinogen-III from 5-aminolevulinate: step 2/4. The protein operates within porphyrin-containing compound metabolism; chlorophyll biosynthesis. Its function is as follows. Tetrapolymerization of the monopyrrole PBG into the hydroxymethylbilane pre-uroporphyrinogen in several discrete steps. In Roseiflexus castenholzii (strain DSM 13941 / HLO8), this protein is Porphobilinogen deaminase.